The sequence spans 157 residues: Small ribosomal subunit protein uS7 (157 aa).

It belongs to the universal ribosomal protein uS7 family. As to quaternary structure, part of the 30S ribosomal subunit. Contacts proteins S9 and S11.

Its function is as follows. One of the primary rRNA binding proteins, it binds directly to 16S rRNA where it nucleates assembly of the head domain of the 30S subunit. Is located at the subunit interface close to the decoding center, probably blocks exit of the E-site tRNA. This chain is Small ribosomal subunit protein uS7, found in Verminephrobacter eiseniae (strain EF01-2).